We begin with the raw amino-acid sequence, 462 residues long: Solute carrier family 41 member 3 (462 aa).

The next 9 membrane-spanning stretches (helical) occupy residues 41-61 (CQVA…GLVM), 121-141 (LAVV…ASLM), 163-183 (VITA…IVIG), 194-214 (IATP…LALM), 225-245 (WYLT…WIFI), 258-278 (YGWF…LILS), 351-371 (VLLF…CLVE), 380-400 (IFVL…LYLA), and 424-444 (GLGD…DWLL).

It belongs to the SLC41A transporter family.

Its subcellular location is the mitochondrion inner membrane. It carries out the reaction Mg(2+)(in) + 2 Na(+)(out) = Mg(2+)(out) + 2 Na(+)(in). Its function is as follows. Na(+)/Mg(2+) ion exchanger that acts as a predominant Mg(2+) efflux system at the mitochondrial inner membrane. This is Solute carrier family 41 member 3 (Slc41a3) from Rattus norvegicus (Rat).